A 188-amino-acid chain; its full sequence is dCTP deaminase (188 aa).

DCTP contacts are provided by residues 111 to 116, 135 to 137, glutamine 156, tyrosine 170, and glutamine 180; these read KSTYAR and TLE. Glutamate 137 serves as the catalytic Proton donor/acceptor.

This sequence belongs to the dCTP deaminase family. As to quaternary structure, homotrimer.

The enzyme catalyses dCTP + H2O + H(+) = dUTP + NH4(+). Its pathway is pyrimidine metabolism; dUMP biosynthesis; dUMP from dCTP (dUTP route): step 1/2. Functionally, catalyzes the deamination of dCTP to dUTP. In Neisseria gonorrhoeae (strain ATCC 700825 / FA 1090), this protein is dCTP deaminase.